A 374-amino-acid polypeptide reads, in one-letter code: Putative F-box protein At5g60060 (374 aa).

The 53-residue stretch at 9 to 61 (SQWSDLPLDILELISDRLDHDSSDTIHLLCLRSVCATWRLSLPLSNKNNRLSK) folds into the F-box domain.

This chain is Putative F-box protein At5g60060, found in Arabidopsis thaliana (Mouse-ear cress).